The following is a 416-amino-acid chain: UDP-N-acetylmuramoylalanine--D-glutamate ligase (416 aa).

104-110 (GSNGKST) is a binding site for ATP.

The protein belongs to the MurCDEF family.

The protein localises to the cytoplasm. It carries out the reaction UDP-N-acetyl-alpha-D-muramoyl-L-alanine + D-glutamate + ATP = UDP-N-acetyl-alpha-D-muramoyl-L-alanyl-D-glutamate + ADP + phosphate + H(+). The protein operates within cell wall biogenesis; peptidoglycan biosynthesis. Cell wall formation. Catalyzes the addition of glutamate to the nucleotide precursor UDP-N-acetylmuramoyl-L-alanine (UMA). In Francisella tularensis subsp. mediasiatica (strain FSC147), this protein is UDP-N-acetylmuramoylalanine--D-glutamate ligase.